A 124-amino-acid chain; its full sequence is Translation initiation factor 5A (124 aa).

At lysine 36 the chain carries Hypusine.

This sequence belongs to the eIF-5A family.

The protein localises to the cytoplasm. Functionally, functions by promoting the formation of the first peptide bond. In Haloquadratum walsbyi (strain DSM 16790 / HBSQ001), this protein is Translation initiation factor 5A.